The following is an 82-amino-acid chain: Small ribosomal subunit protein bS16 (82 aa).

Belongs to the bacterial ribosomal protein bS16 family.

This Deinococcus deserti (strain DSM 17065 / CIP 109153 / LMG 22923 / VCD115) protein is Small ribosomal subunit protein bS16.